The sequence spans 285 residues: Lipoyl synthase (285 aa).

The [4Fe-4S] cluster site is built by cysteine 36, cysteine 41, cysteine 47, cysteine 62, cysteine 66, cysteine 69, and serine 275. The 217-residue stretch at 48–264 folds into the Radical SAM core domain; that stretch reads FSKKTATFLI…KEYAISIGFK (217 aa).

Belongs to the radical SAM superfamily. Lipoyl synthase family. It depends on [4Fe-4S] cluster as a cofactor.

Its subcellular location is the cytoplasm. It carries out the reaction [[Fe-S] cluster scaffold protein carrying a second [4Fe-4S](2+) cluster] + N(6)-octanoyl-L-lysyl-[protein] + 2 oxidized [2Fe-2S]-[ferredoxin] + 2 S-adenosyl-L-methionine + 4 H(+) = [[Fe-S] cluster scaffold protein] + N(6)-[(R)-dihydrolipoyl]-L-lysyl-[protein] + 4 Fe(3+) + 2 hydrogen sulfide + 2 5'-deoxyadenosine + 2 L-methionine + 2 reduced [2Fe-2S]-[ferredoxin]. The protein operates within protein modification; protein lipoylation via endogenous pathway; protein N(6)-(lipoyl)lysine from octanoyl-[acyl-carrier-protein]: step 2/2. In terms of biological role, catalyzes the radical-mediated insertion of two sulfur atoms into the C-6 and C-8 positions of the octanoyl moiety bound to the lipoyl domains of lipoate-dependent enzymes, thereby converting the octanoylated domains into lipoylated derivatives. This is Lipoyl synthase from Caldicellulosiruptor saccharolyticus (strain ATCC 43494 / DSM 8903 / Tp8T 6331).